A 598-amino-acid polypeptide reads, in one-letter code: Aspartate--tRNA(Asp/Asn) ligase (598 aa).

Glu-172 serves as a coordination point for L-aspartate. The aspartate stretch occupies residues 196–199; sequence QLFK. Arg-218 is a binding site for L-aspartate. Residues 218–220 and Gln-227 contribute to the ATP site; that span reads RDE. His-454 provides a ligand contact to L-aspartate. Glu-488 is an ATP binding site. Arg-495 serves as a coordination point for L-aspartate. An ATP-binding site is contributed by 540–543; sequence GLDR.

The protein belongs to the class-II aminoacyl-tRNA synthetase family. Type 1 subfamily. Homodimer.

The protein resides in the cytoplasm. The catalysed reaction is tRNA(Asx) + L-aspartate + ATP = L-aspartyl-tRNA(Asx) + AMP + diphosphate. Functionally, aspartyl-tRNA synthetase with relaxed tRNA specificity since it is able to aspartylate not only its cognate tRNA(Asp) but also tRNA(Asn). Reaction proceeds in two steps: L-aspartate is first activated by ATP to form Asp-AMP and then transferred to the acceptor end of tRNA(Asp/Asn). The protein is Aspartate--tRNA(Asp/Asn) ligase of Leptothrix cholodnii (strain ATCC 51168 / LMG 8142 / SP-6) (Leptothrix discophora (strain SP-6)).